The primary structure comprises 206 residues: MARYLGPKLKLSRREGTDLFLKSGVRAIDSKCKLETAPGQHGARKPRLSEYGTQLREKQKVRRIYGVLEKQFRNYYKEAARLKGNTGENLLQLLETRLDNVVYRMGFGSTRAEARQLVSHKSVMVNGRVVNIPSFKVSANDVVSIREKSRTQARIKAALEVAAQREKPTWVEVDAAKMEGAFKRLPERSDLSADINEQLIVELYSK.

The S4 RNA-binding domain occupies 96–156; the sequence is TRLDNVVYRM…EKSRTQARIK (61 aa).

The protein belongs to the universal ribosomal protein uS4 family. Part of the 30S ribosomal subunit. Contacts protein S5. The interaction surface between S4 and S5 is involved in control of translational fidelity.

One of the primary rRNA binding proteins, it binds directly to 16S rRNA where it nucleates assembly of the body of the 30S subunit. Its function is as follows. With S5 and S12 plays an important role in translational accuracy. This Shewanella amazonensis (strain ATCC BAA-1098 / SB2B) protein is Small ribosomal subunit protein uS4.